Reading from the N-terminus, the 207-residue chain is Small ribosomal subunit protein uS4 (207 aa).

The disordered stretch occupies residues 31-53 (KAKFDSKPGQHGRTSGARTSDYG). In terms of domain architecture, S4 RNA-binding spans 97–157 (CRLDNVVYRM…EKSKKQARIV (61 aa)).

Belongs to the universal ribosomal protein uS4 family. Part of the 30S ribosomal subunit. Contacts protein S5. The interaction surface between S4 and S5 is involved in control of translational fidelity.

One of the primary rRNA binding proteins, it binds directly to 16S rRNA where it nucleates assembly of the body of the 30S subunit. In terms of biological role, with S5 and S12 plays an important role in translational accuracy. In Acidovorax ebreus (strain TPSY) (Diaphorobacter sp. (strain TPSY)), this protein is Small ribosomal subunit protein uS4.